The sequence spans 287 residues: Leukocyte-associated immunoglobulin-like receptor 1 (287 aa).

Positions 1-21 (MSPHPTALLGLVLCLAQTIHT) are cleaved as a signal peptide. At 22–165 (QEEDLPRPSI…SQGLKAEHLY (144 aa)) the chain is on the extracellular side. An Ig-like C2-type domain is found at 29-117 (PSISAEPGTV…KWSEQSDYLE (89 aa)). A disulfide bridge connects residues Cys49 and Cys101. A glycan (N-linked (GlcNAc...) asparagine) is linked at Asn69. The segment at 121–155 (KESSGGPDSPDTEPGSSAGPTQRPSDNSHNEHAPA) is disordered. The span at 134–145 (PGSSAGPTQRPS) shows a compositional bias: polar residues. A helical membrane pass occupies residues 166 to 186 (ILIGVSVVFLFCLLLLVLFCL). The Cytoplasmic segment spans residues 187–287 (HRQNQIKQGP…SITYAAVARH (101 aa)). The disordered stretch occupies residues 192 to 211 (IKQGPPRSKDEEQKPQQRPD). The segment covering 198–208 (RSKDEEQKPQQ) has biased composition (basic and acidic residues). Short sequence motifs (ITIM motif) lie at residues 249–254 (VTYAQL) and 279–284 (ITYAAV). A phosphotyrosine mark is found at Tyr251 and Tyr281.

Interacts with SH2 domains of tyrosine-protein phosphatases PTPN6 and PTPN11. The interaction with PTPN6 is constitutive. Interacts with the SH2 domain of CSK. Binds with high affinity to extracellular matrix collagens, the interaction is functionally important. In terms of processing, phosphorylation at Tyr-251 and Tyr-281 activates it. May be phosphorylated by LCK. Post-translationally, N-glycosylated. Expressed on the majority of peripheral mononuclear cells, including natural killer (NK) cells, T-cells, B-cells, monocytes, and dendritic cells. Highly expressed in naive T-cells and B-cells but no expression on germinal center B-cells. Abnormally low expression in naive B-cells from HIV-1 infected patients. Very low expression in NK cells from a patient with chronic active Epstein-Barr virus infection.

The protein localises to the cell membrane. Functionally, functions as an inhibitory receptor that plays a constitutive negative regulatory role on cytolytic function of natural killer (NK) cells, B-cells and T-cells. Activation by Tyr phosphorylation results in recruitment and activation of the phosphatases PTPN6 and PTPN11. It also reduces the increase of intracellular calcium evoked by B-cell receptor ligation. May also play its inhibitory role independently of SH2-containing phosphatases. Modulates cytokine production in CD4+ T-cells, down-regulating IL2 and IFNG production while inducing secretion of transforming growth factor beta. Also down-regulates IgG and IgE production in B-cells as well as IL8, IL10 and TNF secretion. Inhibits proliferation and induces apoptosis in myeloid leukemia cell lines as well as prevents nuclear translocation of NF-kappa-B p65 subunit/RELA and phosphorylation of I-kappa-B alpha/CHUK in these cells. Inhibits the differentiation of peripheral blood precursors towards dendritic cells. This Homo sapiens (Human) protein is Leukocyte-associated immunoglobulin-like receptor 1 (LAIR1).